The sequence spans 226 residues: tRNA (guanine-N(7)-)-methyltransferase (226 aa).

Residues Asp-59, Glu-84, and Asp-111 each contribute to the S-adenosyl-L-methionine site. A substrate-binding site is contributed by Asp-169.

It belongs to the class I-like SAM-binding methyltransferase superfamily. TrmB family.

It carries out the reaction guanosine(46) in tRNA + S-adenosyl-L-methionine = N(7)-methylguanosine(46) in tRNA + S-adenosyl-L-homocysteine. It participates in tRNA modification; N(7)-methylguanine-tRNA biosynthesis. Functionally, catalyzes the formation of N(7)-methylguanine at position 46 (m7G46) in tRNA. The polypeptide is tRNA (guanine-N(7)-)-methyltransferase (Chloroherpeton thalassium (strain ATCC 35110 / GB-78)).